A 347-amino-acid chain; its full sequence is Putative adhesin P1-like protein MPN_099 (347 aa).

Over residues 282–300 (FGTDHSTQPQPQSLKTTTP) the composition is skewed to polar residues. The segment at 282 to 302 (FGTDHSTQPQPQSLKTTTPVF) is disordered.

The protein belongs to the adhesin P1 family.

This chain is Putative adhesin P1-like protein MPN_099, found in Mycoplasma pneumoniae (strain ATCC 29342 / M129 / Subtype 1) (Mycoplasmoides pneumoniae).